The sequence spans 253 residues: Hydroxyacylglutathione hydrolase (253 aa).

Zn(2+) contacts are provided by His59, His61, Asp63, His64, His118, Asp143, and His181.

The protein belongs to the metallo-beta-lactamase superfamily. Glyoxalase II family. Monomer. The cofactor is Zn(2+).

It catalyses the reaction an S-(2-hydroxyacyl)glutathione + H2O = a 2-hydroxy carboxylate + glutathione + H(+). It participates in secondary metabolite metabolism; methylglyoxal degradation; (R)-lactate from methylglyoxal: step 2/2. Its function is as follows. Thiolesterase that catalyzes the hydrolysis of S-D-lactoyl-glutathione to form glutathione and D-lactic acid. The sequence is that of Hydroxyacylglutathione hydrolase from Prochlorococcus marinus (strain SARG / CCMP1375 / SS120).